The chain runs to 353 residues: Glutamine synthetase nodule isozyme (353 aa).

One can recognise a GS beta-grasp domain in the interval 19–99 (IIAEYIWVGG…VMCDTYTPAG (81 aa)). One can recognise a GS catalytic domain in the interval 106-353 (KRHAAAKIFS…TSMIAETTLL (248 aa)).

This sequence belongs to the glutamine synthetase family. Homooctamer.

The protein resides in the cytoplasm. It carries out the reaction L-glutamate + NH4(+) + ATP = L-glutamine + ADP + phosphate + H(+). The chain is Glutamine synthetase nodule isozyme from Lupinus luteus (European yellow lupine).